The sequence spans 274 residues: 3-methyl-2-oxobutanoate hydroxymethyltransferase (274 aa).

Mg(2+) contacts are provided by aspartate 44 and aspartate 83. Residues 44-45 (DS), aspartate 83, and lysine 113 contribute to the 3-methyl-2-oxobutanoate site. Glutamate 115 lines the Mg(2+) pocket. Residue glutamate 182 is the Proton acceptor of the active site.

It belongs to the PanB family. As to quaternary structure, homodecamer; pentamer of dimers. It depends on Mg(2+) as a cofactor.

It localises to the cytoplasm. The catalysed reaction is 3-methyl-2-oxobutanoate + (6R)-5,10-methylene-5,6,7,8-tetrahydrofolate + H2O = 2-dehydropantoate + (6S)-5,6,7,8-tetrahydrofolate. The protein operates within cofactor biosynthesis; (R)-pantothenate biosynthesis; (R)-pantoate from 3-methyl-2-oxobutanoate: step 1/2. Catalyzes the reversible reaction in which hydroxymethyl group from 5,10-methylenetetrahydrofolate is transferred onto alpha-ketoisovalerate to form ketopantoate. The sequence is that of 3-methyl-2-oxobutanoate hydroxymethyltransferase from Campylobacter jejuni subsp. jejuni serotype O:6 (strain 81116 / NCTC 11828).